Here is a 303-residue protein sequence, read N- to C-terminus: Lipoyl synthase (303 aa).

The [4Fe-4S] cluster site is built by Cys35, Cys40, Cys46, Cys61, Cys65, Cys68, and Ser273. A Radical SAM core domain is found at 47–262 (FRERQATFLI…KELAEKMGFR (216 aa)).

Belongs to the radical SAM superfamily. Lipoyl synthase family. [4Fe-4S] cluster serves as cofactor.

It is found in the cytoplasm. The catalysed reaction is [[Fe-S] cluster scaffold protein carrying a second [4Fe-4S](2+) cluster] + N(6)-octanoyl-L-lysyl-[protein] + 2 oxidized [2Fe-2S]-[ferredoxin] + 2 S-adenosyl-L-methionine + 4 H(+) = [[Fe-S] cluster scaffold protein] + N(6)-[(R)-dihydrolipoyl]-L-lysyl-[protein] + 4 Fe(3+) + 2 hydrogen sulfide + 2 5'-deoxyadenosine + 2 L-methionine + 2 reduced [2Fe-2S]-[ferredoxin]. The protein operates within protein modification; protein lipoylation via endogenous pathway; protein N(6)-(lipoyl)lysine from octanoyl-[acyl-carrier-protein]: step 2/2. Its function is as follows. Catalyzes the radical-mediated insertion of two sulfur atoms into the C-6 and C-8 positions of the octanoyl moiety bound to the lipoyl domains of lipoate-dependent enzymes, thereby converting the octanoylated domains into lipoylated derivatives. This chain is Lipoyl synthase, found in Geobacter sulfurreducens (strain ATCC 51573 / DSM 12127 / PCA).